The chain runs to 371 residues: Ubiquitin receptor RAD23b (371 aa).

The Ubiquitin-like domain maps to 1 to 79 (MKLTVKTLKG…LVVMLSKSKS (79 aa)). The segment covering 79 to 117 (SGGSAGQASVQTSSVSQPVSATTSSTKPAAPSTTQSSPV) has biased composition (low complexity). The tract at residues 79-142 (SGGSAGQASV…DTYGQAASTL (64 aa)) is disordered. Residues 128-142 (PAAQTDTYGQAASTL) are compositionally biased toward polar residues. Residues 146-189 (SSLEQMVQQIMEMGGGSWDKETVTRALRAAYNNPERAVDYLYSG) form the UBA 1 domain. Residues 242 to 285 (GTLEFLRNNDQFQQLRTMVHSNPQILQPMLQELGKQNPQLLRLI) form the STI1 domain. Residues 325-365 (PAEQEAIQRLEAMGFDRALVIEAFLACDRNEELAANYLLEN) form the UBA 2 domain.

This sequence belongs to the RAD23 family. As to quaternary structure, interacts with 'Lys-48'-linked polyubiquitin chains. Interacts with RPN10 via its ubiquitin-like domain. Interacts with UBQ1, UBQ2, UBQ5, UBQ7, UBQ10, UBQ11 and IAA16. Binds to RAD4. In terms of tissue distribution, widely expressed in the whole plant.

The protein resides in the nucleus. It localises to the cytoplasm. May be involved in nucleotide excision repair. Binds and presumably selects ubiquitin-conjugates for destruction. Prefers multiubiquitin chains rather than single ubiquitins, with a binding affinity for 'Lys-48'-linked ubiquitin chains. Acts as a ubiquitin receptor that associates with the 26S proteasomal docking subunit RPN10 for the indirect recognition of ubiquitinated substrates of ubiquitin/26S proteasome-mediated proteolysis (UPP). Involved in UV tolerance in both roots and hypocotyls, specifically in dark conditions. This is Ubiquitin receptor RAD23b from Arabidopsis thaliana (Mouse-ear cress).